Here is an 87-residue protein sequence, read N- to C-terminus: Mitochondrial import inner membrane translocase subunit TIM8 (87 aa).

Positions 44–68 (CFKKCVESVNDSNLSSQEEQCLSNC) match the Twin CX3C motif motif. 2 disulfides stabilise this stretch: Cys44-Cys68 and Cys48-Cys64.

It belongs to the small Tim family. Heterohexamer; composed of 3 copies of TIM8 and 3 copies of TIM13, named soluble 70 kDa complex. Associates with the TIM22 complex, whose core is composed of TIM18, TIM22 and TIM54. Interacts with the transmembrane regions of multi-pass transmembrane proteins in transit.

Its subcellular location is the mitochondrion inner membrane. The protein localises to the mitochondrion intermembrane space. Functionally, mitochondrial intermembrane chaperone that participates in the import and insertion of some multi-pass transmembrane proteins into the mitochondrial inner membrane. Also required for the transfer of beta-barrel precursors from the TOM complex to the sorting and assembly machinery (SAM complex) of the outer membrane. Acts as a chaperone-like protein that protects the hydrophobic precursors from aggregation and guide them through the mitochondrial intermembrane space. The TIM8-TIM13 complex is non essential and only mediates the import of few proteins under precise conditions, while the predominant TIM9-TIM10 70 kDa complex is crucial and mediates the import of much more proteins. Strictly required for import of TIM23 in some conditions, when a low membrane potential exists in the mitochondria. The chain is Mitochondrial import inner membrane translocase subunit TIM8 (TIM8) from Saccharomyces cerevisiae (strain ATCC 204508 / S288c) (Baker's yeast).